The primary structure comprises 335 residues: Glutaredoxin-3 (335 aa).

A2 carries the N-acetylalanine modification. The region spanning 2–117 is the Thioredoxin domain; that stretch reads AAGAAEAAVA…LTKKVQRHAS (116 aa). A phosphoserine mark is found at S117 and S120. Glutaredoxin domains are found at residues 144–236 and 237–335; these read APCM…PKLE and ERLK…RGEN. 2 residues coordinate [2Fe-2S] cluster: C159 and C261.

Homodimer; the homodimer is independent of 2Fe-2S clusters. Heterotrimer; forms a heterotrimeric complex composed by two BOLA2 molecules and one GLRX3 molecule; linked by [2Fe-2S] clusters. Interacts (via N-terminus) with PRKCQ/PKC-theta. Interacts (via C-terminus) with CSRP3. Interacts with CSRP2. Expressed in heart, spleen, testis and, to a lower extent, in thymus and peripheral blood leukocytes. Weakly expressed in lung, placenta, colon and small intestine.

The protein resides in the cytoplasm. Its subcellular location is the cytosol. It is found in the cell cortex. It localises to the myofibril. The protein localises to the sarcomere. The protein resides in the z line. Functionally, together with BOLA2, acts as a cytosolic iron-sulfur (Fe-S) cluster assembly factor that facilitates [2Fe-2S] cluster insertion into a subset of cytosolic proteins. Acts as a critical negative regulator of cardiac hypertrophy and a positive inotropic regulator. Required for hemoglobin maturation. Does not possess any thyoredoxin activity since it lacks the conserved motif that is essential for catalytic activity. This chain is Glutaredoxin-3 (GLRX3), found in Homo sapiens (Human).